The following is a 350-amino-acid chain: Guanine nucleotide-binding protein G(t) subunit alpha (350 aa).

Residues 1-21 (MGAGASAEEKHSRELEKKLKE) form a disordered region. A lipid anchor (N-myristoyl glycine) is attached at Gly2. Positions 7–21 (AEEKHSRELEKKLKE) are enriched in basic and acidic residues. Residues 28–350 (RTVKLLLLGA…KENLKDCGLF (323 aa)) form the G-alpha domain. A G1 motif region spans residues 31–44 (KLLLLGAGESGKST). GTP-binding positions include 36–43 (GAGESGKS), 171–177 (LRSRVKT), 196–200 (DVGGQ), 265–268 (NKKD), and Ala322. Ser43 and Thr177 together coordinate Mg(2+). The segment at 169-177 (DVLRSRVKT) is G2 motif. The interval 192–201 (FRMFDVGGQR) is G3 motif. The tract at residues 261 to 268 (VLFLNKKD) is G4 motif. Residues 320 to 325 (TCATDT) are G5 motif.

It belongs to the G-alpha family. G(i/o/t/z) subfamily. G proteins are composed of 3 units; alpha, beta and gamma. The alpha chain contains the guanine nucleotide binding site.

Functionally, guanine nucleotide-binding proteins (G proteins) are involved as modulators or transducers in various transmembrane signaling systems. Transducin is an amplifier and one of the transducers of a visual impulse that performs the coupling between rhodopsin and cGMP-phosphodiesterase. This Xenopus laevis (African clawed frog) protein is Guanine nucleotide-binding protein G(t) subunit alpha (gnat).